Reading from the N-terminus, the 473-residue chain is Vasculin (473 aa).

Disordered regions lie at residues 1-25 (MAQHDFAPAWLNFPTPPSSTKSSLN), 46-149 (RHNS…REPN), and 191-342 (VGNL…QERD). Ser49 carries the post-translational modification Phosphoserine. Omega-N-methylarginine is present on Arg87. The span at 119–133 (ETGRKEDKRERKQFE) shows a compositional bias: basic and acidic residues. 2 stretches are compositionally biased toward polar residues: residues 194 to 204 (LPSQPVKNGTG) and 251 to 286 (AFKSTAKNFSPSTNSVKECNRSNSSSPVDKLNQQPR). Phosphoserine occurs at positions 274, 276, 322, and 381. The segment covering 293 to 329 (MRTDKKSEFLKALKRDRVEEEHEDESRAGSEKDDDSF) has biased composition (basic and acidic residues). A disordered region spans residues 444-473 (GPWKNSTFKPTTENDDTETSSSDTSDDDDV). Over residues 456 to 473 (ENDDTETSSSDTSDDDDV) the composition is skewed to acidic residues.

The protein belongs to the vasculin family. In terms of assembly, interacts with GTF2B, GTF2F2, RNA polymerase II and TBP. Widely expressed. Some isoforms may be specifically expressed in veins and arteries (at protein level). Isoform 4 is widely expressed. Isoform 1, isoform 2 and isoform 3 may be specifically expressed in vascular smooth muscle cells.

Its subcellular location is the nucleus. The protein resides in the cytoplasm. Functions as a GC-rich promoter-specific transactivating transcription factor. The polypeptide is Vasculin (GPBP1) (Homo sapiens (Human)).